The following is a 457-amino-acid chain: ATP synthase subunit beta (457 aa).

Residue 147–154 (GGAGVGKT) coordinates ATP.

Belongs to the ATPase alpha/beta chains family. In terms of assembly, F-type ATPases have 2 components, CF(1) - the catalytic core - and CF(0) - the membrane proton channel. CF(1) has five subunits: alpha(3), beta(3), gamma(1), delta(1), epsilon(1). CF(0) has three main subunits: a(1), b(2) and c(9-12). The alpha and beta chains form an alternating ring which encloses part of the gamma chain. CF(1) is attached to CF(0) by a central stalk formed by the gamma and epsilon chains, while a peripheral stalk is formed by the delta and b chains.

The protein localises to the cell inner membrane. The catalysed reaction is ATP + H2O + 4 H(+)(in) = ADP + phosphate + 5 H(+)(out). Its function is as follows. Produces ATP from ADP in the presence of a proton gradient across the membrane. The catalytic sites are hosted primarily by the beta subunits. This is ATP synthase subunit beta from Haemophilus influenzae (strain 86-028NP).